We begin with the raw amino-acid sequence, 423 residues long: Adenylosuccinate synthetase (423 aa).

The active-site Proton acceptor is the aspartate 12. Mg(2+)-binding residues include aspartate 12 and glycine 39. IMP contacts are provided by residues 37–40 (NAGH), threonine 129, arginine 143, asparagine 221, threonine 236, and arginine 300. Residue 39–41 (GHS) coordinates GTP. The active-site Proton donor is histidine 40. 296-302 (VSTGRKR) lines the substrate pocket. GTP is bound by residues arginine 302, 328–330 (KLD), and 412–414 (GTG).

Belongs to the adenylosuccinate synthetase family. In terms of assembly, homodimer. Mg(2+) is required as a cofactor.

It localises to the cytoplasm. It catalyses the reaction IMP + L-aspartate + GTP = N(6)-(1,2-dicarboxyethyl)-AMP + GDP + phosphate + 2 H(+). It participates in purine metabolism; AMP biosynthesis via de novo pathway; AMP from IMP: step 1/2. Plays an important role in the de novo pathway and in the salvage pathway of purine nucleotide biosynthesis. Catalyzes the first committed step in the biosynthesis of AMP from IMP. The protein is Adenylosuccinate synthetase of Pyricularia oryzae (strain 70-15 / ATCC MYA-4617 / FGSC 8958) (Rice blast fungus).